A 732-amino-acid chain; its full sequence is Anthranilate synthase (732 aa).

In terms of domain architecture, Glutamine amidotransferase type-1 spans 533–728 (RVLLVDHDDS…MDRLAAGALT (196 aa)). 583–585 (GPG) is a binding site for L-glutamine. The Nucleophile; for GATase activity role is filled by Cys-610. Residues Gln-614 and 660–661 (SL) each bind L-glutamine. Active-site for GATase activity residues include His-699 and Glu-701.

The enzyme catalyses chorismate + L-glutamine = anthranilate + pyruvate + L-glutamate + H(+). It participates in amino-acid biosynthesis; L-tryptophan biosynthesis; L-tryptophan from chorismate: step 1/5. In Azospirillum brasilense, this protein is Anthranilate synthase (trpE(G)).